The chain runs to 449 residues: Putative glycosyltransferase 7 (449 aa).

At 1 to 32 the chain is on the cytoplasmic side; sequence MVSPETSSSHYQSSPMAKYAGTRTRPVVCISD. The helical; Signal-anchor for type II membrane protein transmembrane segment at 33–53 threads the bilayer; sequence VVLFLGGAFMSLILVWSFFSF. The Lumenal segment spans residues 54–449; that stretch reads SSISPNLTVK…VPFDYPDEPW (396 aa). Residues N59, N123, and N332 are each glycosylated (N-linked (GlcNAc...) asparagine).

Belongs to the glycosyltransferase 34 family.

It localises to the golgi apparatus membrane. Its function is as follows. Probable glycosyltransferase that may be involved in the biosynthesis of xyloglucan. This chain is Putative glycosyltransferase 7 (GT7), found in Arabidopsis thaliana (Mouse-ear cress).